Consider the following 386-residue polypeptide: Bifunctional chorismate mutase/prephenate dehydratase (386 aa).

Residues 1 to 92 form the Chorismate mutase domain; the sequence is MTSENPLLAL…DSVLTQQALL (92 aa). Substrate-binding residues include Arg11, Arg28, Lys39, Asp48, Glu52, Ser84, and Gln88. One can recognise a Prephenate dehydratase domain in the interval 105–285; it reads RIAFLGPKGS…NFTRFVVLAR (181 aa). The ACT domain occupies 299–376; sequence TLLMATGQQA…RSMKVLGCYP (78 aa).

It localises to the cytoplasm. It carries out the reaction chorismate = prephenate. The catalysed reaction is prephenate + H(+) = 3-phenylpyruvate + CO2 + H2O. It participates in amino-acid biosynthesis; L-phenylalanine biosynthesis; phenylpyruvate from prephenate: step 1/1. Its pathway is metabolic intermediate biosynthesis; prephenate biosynthesis; prephenate from chorismate: step 1/1. Catalyzes the Claisen rearrangement of chorismate to prephenate and the decarboxylation/dehydration of prephenate to phenylpyruvate. This chain is Bifunctional chorismate mutase/prephenate dehydratase (pheA), found in Escherichia coli O157:H7.